The following is a 575-amino-acid chain: Reverse gyrse subunit B (575 aa).

The RG N-terminal-type; degenerate zinc-finger motif lies at 1-39 (MKIYYNNVCPNCSGRISNERLIKGLPCENDYPYEEGTIE). ATP-binding positions include Gln-83 and 100-107 (APTGMGKT). The Helicase ATP-binding domain occupies 87 to 247 (FIRAYKGYSF…KLKISGKDLE (161 aa)). Residues 204 to 207 (DDVD) carry the DEAD box motif. Residues 316-465 (QTLELIKKLG…ALKMVEEAIE (150 aa)) enclose the Helicase C-terminal domain.

This sequence belongs to the DEAD box helicase family. DDVD subfamily. As to quaternary structure, heterodimer of an RgyA and RgyB subunit.

Its subcellular location is the cytoplasm. The catalysed reaction is ATP + H2O = ADP + phosphate + H(+). Its function is as follows. Modifies the topological state of DNA by introducing positive supercoils in an ATP-dependent process. Binds to single-stranded DNA, transiently cleaves and then rejoins the end, introducing a positive supercoil in the process. The scissile phosphodiester is attacked by the catalytic tyrosine of the enzyme, resulting in the formation of a DNA-(5'-phosphotyrosyl)-enzyme intermediate. Probably involved in rewinding DNA strands in regions of the chromosome that have opened up to allow replication, transcription, DNA repair or for DNA protection. Reconstituted holoenzyme binds dsDNA a bit better than ssDNA, this subunit preferentially binds dsDNA. In isolation this subunit has DNA-stimulated ATPase activity that is stimulated by topoisomerase-domain containing RgyA. This subunit inhibits the relaxation activity of the topoisomerase subunit while promoting positive supercoiling. In Nanoarchaeum equitans (strain Kin4-M), this protein is Reverse gyrse subunit B.